Here is a 454-residue protein sequence, read N- to C-terminus: Bifunctional protein GlmU (454 aa).

The interval 1-226 (MALNVVILAA…AIEVEGANNR (226 aa)) is pyrophosphorylase. Residues 8–11 (LAAG), Lys-22, Gln-73, 78–79 (GT), 100–102 (YGD), Gly-137, Glu-151, Asn-166, and Asn-224 each bind UDP-N-acetyl-alpha-D-glucosamine. A Mg(2+)-binding site is contributed by Asp-102. A Mg(2+)-binding site is contributed by Asn-224. The linker stretch occupies residues 227 to 247 (VQLAQLERAYQAREAEKLMIA). An N-acetyltransferase region spans residues 248-454 (GANLRDPSRI…GWQRPVKIKK (207 aa)). UDP-N-acetyl-alpha-D-glucosamine contacts are provided by Arg-330 and Lys-348. The active-site Proton acceptor is His-360. UDP-N-acetyl-alpha-D-glucosamine-binding residues include Tyr-363 and Asn-374. Acetyl-CoA contacts are provided by residues Ala-377, 383–384 (NY), Ser-402, Ala-420, and Arg-437.

The protein in the N-terminal section; belongs to the N-acetylglucosamine-1-phosphate uridyltransferase family. In the C-terminal section; belongs to the transferase hexapeptide repeat family. In terms of assembly, homotrimer. Mg(2+) is required as a cofactor.

It is found in the cytoplasm. It carries out the reaction alpha-D-glucosamine 1-phosphate + acetyl-CoA = N-acetyl-alpha-D-glucosamine 1-phosphate + CoA + H(+). It catalyses the reaction N-acetyl-alpha-D-glucosamine 1-phosphate + UTP + H(+) = UDP-N-acetyl-alpha-D-glucosamine + diphosphate. Its pathway is nucleotide-sugar biosynthesis; UDP-N-acetyl-alpha-D-glucosamine biosynthesis; N-acetyl-alpha-D-glucosamine 1-phosphate from alpha-D-glucosamine 6-phosphate (route II): step 2/2. The protein operates within nucleotide-sugar biosynthesis; UDP-N-acetyl-alpha-D-glucosamine biosynthesis; UDP-N-acetyl-alpha-D-glucosamine from N-acetyl-alpha-D-glucosamine 1-phosphate: step 1/1. It participates in bacterial outer membrane biogenesis; LPS lipid A biosynthesis. Functionally, catalyzes the last two sequential reactions in the de novo biosynthetic pathway for UDP-N-acetylglucosamine (UDP-GlcNAc). The C-terminal domain catalyzes the transfer of acetyl group from acetyl coenzyme A to glucosamine-1-phosphate (GlcN-1-P) to produce N-acetylglucosamine-1-phosphate (GlcNAc-1-P), which is converted into UDP-GlcNAc by the transfer of uridine 5-monophosphate (from uridine 5-triphosphate), a reaction catalyzed by the N-terminal domain. This chain is Bifunctional protein GlmU, found in Shewanella sp. (strain ANA-3).